Reading from the N-terminus, the 184-residue chain is ADP-ribosylation factor-like protein 2 (184 aa).

A lipid anchor (N-myristoyl glycine) is attached at G2. Residues 23–30, 66–70, G68, and 125–128 contribute to the GTP site; these read GLDNAGKT, DVGGQ, and NKSD.

This sequence belongs to the small GTPase superfamily. Arf family.

The protein localises to the cytoplasm. Its subcellular location is the cell membrane. It is found in the cytoskeleton. The protein resides in the microtubule organizing center. It localises to the centrosome. Functionally, GTP-binding protein that functions in embryogenesis, cytokinesis, germline development and microtubulule cytoskeleton dynamics. This chain is ADP-ribosylation factor-like protein 2 (evl-20.1), found in Caenorhabditis briggsae.